Reading from the N-terminus, the 163-residue chain is Transcription elongation factor GreB (163 aa).

The protein belongs to the GreA/GreB family. GreB subfamily.

In terms of biological role, necessary for efficient RNA polymerase transcription elongation past template-encoded arresting sites. The arresting sites in DNA have the property of trapping a certain fraction of elongating RNA polymerases that pass through, resulting in locked ternary complexes. Cleavage of the nascent transcript by cleavage factors such as GreA or GreB allows the resumption of elongation from the new 3'terminus. GreB releases sequences of up to 9 nucleotides in length. This Vibrio parahaemolyticus serotype O3:K6 (strain RIMD 2210633) protein is Transcription elongation factor GreB.